The following is a 184-amino-acid chain: Phosphopantetheine adenylyltransferase (184 aa).

Ser8 lines the substrate pocket. Residues 8–9 (SF) and His16 each bind ATP. Substrate-binding residues include Lys40, Leu74, and Arg88. ATP contacts are provided by residues 89–91 (GLR), Glu99, and 123–129 (WSFVSST).

This sequence belongs to the bacterial CoaD family. As to quaternary structure, homohexamer. Mg(2+) is required as a cofactor.

The protein localises to the cytoplasm. The enzyme catalyses (R)-4'-phosphopantetheine + ATP + H(+) = 3'-dephospho-CoA + diphosphate. It participates in cofactor biosynthesis; coenzyme A biosynthesis; CoA from (R)-pantothenate: step 4/5. Its function is as follows. Reversibly transfers an adenylyl group from ATP to 4'-phosphopantetheine, yielding dephospho-CoA (dPCoA) and pyrophosphate. The chain is Phosphopantetheine adenylyltransferase from Deinococcus geothermalis (strain DSM 11300 / CIP 105573 / AG-3a).